A 126-amino-acid polypeptide reads, in one-letter code: Large ribosomal subunit protein eL32 (126 aa).

The protein belongs to the eukaryotic ribosomal protein eL32 family.

This is Large ribosomal subunit protein eL32 from Thermococcus onnurineus (strain NA1).